Reading from the N-terminus, the 487-residue chain is Benzaldehyde dehydrogenase [NAD(+)] (487 aa).

232–237 (GSTQVG) contributes to the NAD(+) binding site. Active-site residues include Glu254 and Cys288.

The protein belongs to the aldehyde dehydrogenase family. Homotetramer.

It carries out the reaction benzaldehyde + NAD(+) + H2O = benzoate + NADH + 2 H(+). This Pseudomonas putida (Arthrobacter siderocapsulatus) protein is Benzaldehyde dehydrogenase [NAD(+)] (xylC).